We begin with the raw amino-acid sequence, 95 residues long: Enhancer of yellow 2b transcription factor (95 aa).

This sequence belongs to the ENY2 family. Expressed specifically in testis.

Testis-specific paralog of the ubiquitously expressed transcription and mRNA export factor e(y)2. Cannot functionally replace e(y)2. In Drosophila melanogaster (Fruit fly), this protein is Enhancer of yellow 2b transcription factor (e(y)2b).